The chain runs to 192 residues: Peptidyl-tRNA hydrolase (192 aa).

TRNA is bound at residue Tyr17. The active-site Proton acceptor is the His22. 3 residues coordinate tRNA: Phe68, Asn70, and Asn116.

The protein belongs to the PTH family. As to quaternary structure, monomer.

It is found in the cytoplasm. It carries out the reaction an N-acyl-L-alpha-aminoacyl-tRNA + H2O = an N-acyl-L-amino acid + a tRNA + H(+). Functionally, hydrolyzes ribosome-free peptidyl-tRNAs (with 1 or more amino acids incorporated), which drop off the ribosome during protein synthesis, or as a result of ribosome stalling. Its function is as follows. Catalyzes the release of premature peptidyl moieties from peptidyl-tRNA molecules trapped in stalled 50S ribosomal subunits, and thus maintains levels of free tRNAs and 50S ribosomes. This Xylella fastidiosa (strain M12) protein is Peptidyl-tRNA hydrolase.